The sequence spans 494 residues: Aspartyl/glutamyl-tRNA(Asn/Gln) amidotransferase subunit B (494 aa).

It belongs to the GatB/GatE family. GatB subfamily. Heterotrimer of A, B and C subunits.

The catalysed reaction is L-glutamyl-tRNA(Gln) + L-glutamine + ATP + H2O = L-glutaminyl-tRNA(Gln) + L-glutamate + ADP + phosphate + H(+). It carries out the reaction L-aspartyl-tRNA(Asn) + L-glutamine + ATP + H2O = L-asparaginyl-tRNA(Asn) + L-glutamate + ADP + phosphate + 2 H(+). Its function is as follows. Allows the formation of correctly charged Asn-tRNA(Asn) or Gln-tRNA(Gln) through the transamidation of misacylated Asp-tRNA(Asn) or Glu-tRNA(Gln) in organisms which lack either or both of asparaginyl-tRNA or glutaminyl-tRNA synthetases. The reaction takes place in the presence of glutamine and ATP through an activated phospho-Asp-tRNA(Asn) or phospho-Glu-tRNA(Gln). In Rhizorhabdus wittichii (strain DSM 6014 / CCUG 31198 / JCM 15750 / NBRC 105917 / EY 4224 / RW1) (Sphingomonas wittichii), this protein is Aspartyl/glutamyl-tRNA(Asn/Gln) amidotransferase subunit B.